The chain runs to 422 residues: Histidine--tRNA ligase (422 aa).

This sequence belongs to the class-II aminoacyl-tRNA synthetase family. Homodimer.

Its subcellular location is the cytoplasm. The enzyme catalyses tRNA(His) + L-histidine + ATP = L-histidyl-tRNA(His) + AMP + diphosphate + H(+). The protein is Histidine--tRNA ligase of Vesicomyosocius okutanii subsp. Calyptogena okutanii (strain HA).